The primary structure comprises 183 residues: NADH-quinone oxidoreductase subunit A (183 aa).

A run of 3 helical transmembrane segments spans residues 11-31, 63-83, and 98-118; these read IIAFVIGVTFLCVFMLTVPLL, FYLVAIFFVVFDLEALYLYAW, and VVIFVVDLLIALVYAFSVGAL. The segment at 159–183 is disordered; the sequence is TGQIPAQSSGRVKSKTTPALSSEKE.

It belongs to the complex I subunit 3 family. In terms of assembly, NDH-1 is composed of 14 different subunits. Subunits NuoA, H, J, K, L, M, N constitute the membrane sector of the complex.

It localises to the cell inner membrane. It carries out the reaction a quinone + NADH + 5 H(+)(in) = a quinol + NAD(+) + 4 H(+)(out). In terms of biological role, NDH-1 shuttles electrons from NADH, via FMN and iron-sulfur (Fe-S) centers, to quinones in the respiratory chain. The immediate electron acceptor for the enzyme in this species is believed to be ubiquinone. Couples the redox reaction to proton translocation (for every two electrons transferred, four hydrogen ions are translocated across the cytoplasmic membrane), and thus conserves the redox energy in a proton gradient. In Acinetobacter baumannii (strain ACICU), this protein is NADH-quinone oxidoreductase subunit A.